Consider the following 251-residue polypeptide: 5'-nucleotidase SurE 1 (251 aa).

A divalent metal cation is bound by residues Asp8, Asp9, Ser39, and Asn95.

It belongs to the SurE nucleotidase family. It depends on a divalent metal cation as a cofactor.

It localises to the cytoplasm. It catalyses the reaction a ribonucleoside 5'-phosphate + H2O = a ribonucleoside + phosphate. Functionally, nucleotidase that shows phosphatase activity on nucleoside 5'-monophosphates. The chain is 5'-nucleotidase SurE 1 from Thermus thermophilus (strain ATCC BAA-163 / DSM 7039 / HB27).